A 333-amino-acid polypeptide reads, in one-letter code: MAALAPPVAAIRRAIRHALIELPDPGPVLVACSGGADSLALAAATAFVAPRLGRSAGLVTVDHGLQEGSAQRAAAVADWARATGLAPVEVVRVDVSGRPGGPEAAARQARYRALTEVAGGLGAAALLTGHTRDDQAETVLLALARGAGPRGLAGMPARRWLGAALLLRPLLEVSREQTRAACTALGLDPWVDPHNADPAYARARVRAEVLPALVRALGPAVVDNLARTARLVAVDTAALDEQASTALDGVRHPDGGLSVGGLAALVPAVRGRVLHAWARELGARPAALSHRHVGALEALVTGWRGQGAAHLPGGLRVLRRAGRLTAIDPGAQV.

33–38 (SGGADS) is an ATP binding site.

Belongs to the tRNA(Ile)-lysidine synthase family.

Its subcellular location is the cytoplasm. The catalysed reaction is cytidine(34) in tRNA(Ile2) + L-lysine + ATP = lysidine(34) in tRNA(Ile2) + AMP + diphosphate + H(+). Ligates lysine onto the cytidine present at position 34 of the AUA codon-specific tRNA(Ile) that contains the anticodon CAU, in an ATP-dependent manner. Cytidine is converted to lysidine, thus changing the amino acid specificity of the tRNA from methionine to isoleucine. In Salinispora tropica (strain ATCC BAA-916 / DSM 44818 / JCM 13857 / NBRC 105044 / CNB-440), this protein is tRNA(Ile)-lysidine synthase.